We begin with the raw amino-acid sequence, 414 residues long: Relaxin-3 receptor 2 (414 aa).

The Extracellular segment spans residues 1 to 43; that stretch reads MATSNSSASLPTLFWVNGSGDSVLSTDGAAMPVQFLVLRIMVA. Asparagine 5 and asparagine 17 each carry an N-linked (GlcNAc...) asparagine glycan. Residues 44–64 traverse the membrane as a helical segment; the sequence is LAYGLVGIIGLLGNLAVLWVL. The Cytoplasmic portion of the chain corresponds to 65–77; sequence GNCGQRVPGLSSD. Residues 78–98 traverse the membrane as a helical segment; the sequence is TFVFSLALADLGLALTLPFWA. Residues 99 to 116 are Extracellular-facing; that stretch reads TESAMDFHWPFGSALCKV. Residues cysteine 114 and cysteine 191 are joined by a disulfide bond. The chain crosses the membrane as a helical span at residues 117 to 137; that stretch reads VLTTTVLSIYASTFLITALSI. Topologically, residues 138–155 are cytoplasmic; it reads ARYWVVAMAVGPGSHLSV. The chain crosses the membrane as a helical span at residues 156–176; it reads FWARVVTLAVWVAAALVTVPT. Topologically, residues 177 to 209 are extracellular; sequence AIFGAEVELWGVCLCLLRFPSRYWLGAYQLQRV. Residues 210 to 230 traverse the membrane as a helical segment; it reads VLAFIVPLGVITTSYLLLLAF. The Cytoplasmic portion of the chain corresponds to 231–255; that stretch reads LERQQRCRPRQWQDSRVVARSVRVL. A helical membrane pass occupies residues 256 to 276; the sequence is VASFALCWVPNHVVTLWEILV. Over 277-293 the chain is Extracellular; the sequence is RFDLVPWDSTFYTFHTY. The helical transmembrane segment at 294–316 threads the bilayer; that stretch reads ILPITTCLAHSNSCLNPVIYCLL. The Cytoplasmic segment spans residues 317 to 414; it reads RREPQQVLVS…SQAAVSPGEV (98 aa).

The protein belongs to the G-protein coupled receptor 1 family. Detected only in bone marrow.

It is found in the cell membrane. Its function is as follows. High affinity receptor for INSL5. Also acts as a receptor for RLN3/relaxin-3, as well as bradykinin and kallidin. Binding of the ligand inhibit cAMP accumulation. The polypeptide is Relaxin-3 receptor 2 (Rxfp4) (Mus musculus (Mouse)).